The following is a 298-amino-acid chain: Acetylglutamate kinase (298 aa).

Substrate is bound by residues 69 to 70, Arg-91, and Asn-196; that span reads GG.

This sequence belongs to the acetylglutamate kinase family. ArgB subfamily.

It is found in the cytoplasm. The catalysed reaction is N-acetyl-L-glutamate + ATP = N-acetyl-L-glutamyl 5-phosphate + ADP. It functions in the pathway amino-acid biosynthesis; L-arginine biosynthesis; N(2)-acetyl-L-ornithine from L-glutamate: step 2/4. Catalyzes the ATP-dependent phosphorylation of N-acetyl-L-glutamate. The sequence is that of Acetylglutamate kinase from Bradyrhizobium sp. (strain ORS 278).